We begin with the raw amino-acid sequence, 275 residues long: tRNA pseudouridine synthase A (275 aa).

Asp56 (nucleophile) is an active-site residue. Tyr110 lines the substrate pocket.

This sequence belongs to the tRNA pseudouridine synthase TruA family.

It carries out the reaction uridine(38/39/40) in tRNA = pseudouridine(38/39/40) in tRNA. In terms of biological role, formation of pseudouridine at positions 38, 39 and 40 in the anticodon stem and loop of transfer RNAs. The sequence is that of tRNA pseudouridine synthase A from Haloarcula marismortui (strain ATCC 43049 / DSM 3752 / JCM 8966 / VKM B-1809) (Halobacterium marismortui).